A 209-amino-acid chain; its full sequence is Uracil phosphoribosyltransferase (209 aa).

Residues arginine 79, arginine 104, and 131–139 (DPMLATGGS) each bind 5-phospho-alpha-D-ribose 1-diphosphate. Uracil contacts are provided by residues isoleucine 194 and 199–201 (GDA). Aspartate 200 lines the 5-phospho-alpha-D-ribose 1-diphosphate pocket.

This sequence belongs to the UPRTase family. Mg(2+) is required as a cofactor.

The catalysed reaction is UMP + diphosphate = 5-phospho-alpha-D-ribose 1-diphosphate + uracil. The protein operates within pyrimidine metabolism; UMP biosynthesis via salvage pathway; UMP from uracil: step 1/1. Allosterically activated by GTP. Its function is as follows. Catalyzes the conversion of uracil and 5-phospho-alpha-D-ribose 1-diphosphate (PRPP) to UMP and diphosphate. The chain is Uracil phosphoribosyltransferase from Ligilactobacillus salivarius (strain UCC118) (Lactobacillus salivarius).